Reading from the N-terminus, the 331-residue chain is Gamma-parvin (331 aa).

At Met1 the chain carries N-acetylmethionine. The tract at residues 17–39 (EPPAEEELSKGGKKKYLPPTSRK) is disordered. 2 consecutive Calponin-homology (CH) domains span residues 44–151 (EELQ…KRFQ) and 210–317 (NAVK…CKHT).

It belongs to the parvin family. In terms of assembly, interacts with ILK; the interaction promotes the establishment of cell polarity required for leukocyte migration. Interacts with ARHGEF6; the guanine nucleotide exchange factor activity of ARHGEF6 is essential for the PARVG-induced enhancement of cell spreading. As to expression, expressed predominantly in lymphoid organs, including spleen, thymus, lymph node, bone marrow and peripheral blood leukocytes and moderately in the digestive tract, including stomach, duodenum, jejunum, ileum, ileocecum and appendix, as well as in lung and liver. Also expressed in tumors, but at a lower level than in the corresponding normal tissues.

It is found in the cell junction. The protein localises to the focal adhesion. It localises to the cell membrane. The protein resides in the cytoplasm. Its subcellular location is the cytoskeleton. In terms of biological role, plays a role with ILK in promoting the cell adhesion and spreading of leukocytes. In Homo sapiens (Human), this protein is Gamma-parvin (PARVG).